The following is a 688-amino-acid chain: Elongation factor G (688 aa).

The 275-residue stretch at 8 to 282 folds into the tr-type G domain; it reads EKTRNIGIMA…AIIDYLPSPM (275 aa). GTP contacts are provided by residues 17-24, 81-85, and 135-138; these read AHIDAGKT, DTPGH, and NKMD.

The protein belongs to the TRAFAC class translation factor GTPase superfamily. Classic translation factor GTPase family. EF-G/EF-2 subfamily.

It is found in the cytoplasm. Its function is as follows. Catalyzes the GTP-dependent ribosomal translocation step during translation elongation. During this step, the ribosome changes from the pre-translocational (PRE) to the post-translocational (POST) state as the newly formed A-site-bound peptidyl-tRNA and P-site-bound deacylated tRNA move to the P and E sites, respectively. Catalyzes the coordinated movement of the two tRNA molecules, the mRNA and conformational changes in the ribosome. This Phytoplasma mali (strain AT) protein is Elongation factor G.